We begin with the raw amino-acid sequence, 321 residues long: Glutaminase (321 aa).

Residues Ser-69, Asn-120, Glu-165, Asn-172, Tyr-196, Tyr-248, and Val-266 each coordinate substrate.

This sequence belongs to the glutaminase family. In terms of assembly, homotetramer.

The catalysed reaction is L-glutamine + H2O = L-glutamate + NH4(+). This Bacteroides thetaiotaomicron (strain ATCC 29148 / DSM 2079 / JCM 5827 / CCUG 10774 / NCTC 10582 / VPI-5482 / E50) protein is Glutaminase.